A 175-amino-acid polypeptide reads, in one-letter code: Translation initiation factor IF-3 (175 aa).

This sequence belongs to the IF-3 family. As to quaternary structure, monomer.

The protein resides in the cytoplasm. In terms of biological role, IF-3 binds to the 30S ribosomal subunit and shifts the equilibrium between 70S ribosomes and their 50S and 30S subunits in favor of the free subunits, thus enhancing the availability of 30S subunits on which protein synthesis initiation begins. This chain is Translation initiation factor IF-3, found in Blochmanniella floridana.